The primary structure comprises 211 residues: ATP phosphoribosyltransferase (211 aa).

It belongs to the ATP phosphoribosyltransferase family. Short subfamily. As to quaternary structure, heteromultimer composed of HisG and HisZ subunits.

The protein resides in the cytoplasm. It catalyses the reaction 1-(5-phospho-beta-D-ribosyl)-ATP + diphosphate = 5-phospho-alpha-D-ribose 1-diphosphate + ATP. Its pathway is amino-acid biosynthesis; L-histidine biosynthesis; L-histidine from 5-phospho-alpha-D-ribose 1-diphosphate: step 1/9. In terms of biological role, catalyzes the condensation of ATP and 5-phosphoribose 1-diphosphate to form N'-(5'-phosphoribosyl)-ATP (PR-ATP). Has a crucial role in the pathway because the rate of histidine biosynthesis seems to be controlled primarily by regulation of HisG enzymatic activity. The polypeptide is ATP phosphoribosyltransferase (Rippkaea orientalis (strain PCC 8801 / RF-1) (Cyanothece sp. (strain PCC 8801))).